Reading from the N-terminus, the 506-residue chain is Protein MGF 505-9R (506 aa).

3 ANK repeats span residues 54 to 83 (PTHKAVQIAASEGNEDIVKLFLLWKGSLQY), 253 to 283 (QVDTVLFQAVKYNHRKILAHFIHEIPRETVE), and 313 to 343 (FVKKLLHAVVKHKYMLIIKLLLERPKKKINL).

The protein belongs to the asfivirus MGF 505 family.

Functionally, plays a role in virus cell tropism, and may be required for efficient virus replication in macrophages. The protein is Protein MGF 505-9R of Ornithodoros (relapsing fever ticks).